Consider the following 541-residue polypeptide: Glucose-6-phosphate isomerase (541 aa).

Glu-346 acts as the Proton donor in catalysis. Residues His-377 and Lys-506 contribute to the active site.

It belongs to the GPI family.

The protein resides in the cytoplasm. The enzyme catalyses alpha-D-glucose 6-phosphate = beta-D-fructose 6-phosphate. It participates in carbohydrate biosynthesis; gluconeogenesis. It functions in the pathway carbohydrate degradation; glycolysis; D-glyceraldehyde 3-phosphate and glycerone phosphate from D-glucose: step 2/4. Catalyzes the reversible isomerization of glucose-6-phosphate to fructose-6-phosphate. In Rhizobium etli (strain CIAT 652), this protein is Glucose-6-phosphate isomerase.